We begin with the raw amino-acid sequence, 120 residues long: Peptidyl-tRNA hydrolase (120 aa).

The protein belongs to the PTH2 family.

The protein localises to the cytoplasm. It catalyses the reaction an N-acyl-L-alpha-aminoacyl-tRNA + H2O = an N-acyl-L-amino acid + a tRNA + H(+). Functionally, the natural substrate for this enzyme may be peptidyl-tRNAs which drop off the ribosome during protein synthesis. In Saccharolobus islandicus (strain Y.N.15.51 / Yellowstone #2) (Sulfolobus islandicus), this protein is Peptidyl-tRNA hydrolase.